The primary structure comprises 517 residues: Bifunctional purine biosynthesis protein PurH (517 aa).

Residues Met1–Val145 form the MGS-like domain.

It belongs to the PurH family.

The catalysed reaction is (6R)-10-formyltetrahydrofolate + 5-amino-1-(5-phospho-beta-D-ribosyl)imidazole-4-carboxamide = 5-formamido-1-(5-phospho-D-ribosyl)imidazole-4-carboxamide + (6S)-5,6,7,8-tetrahydrofolate. The enzyme catalyses IMP + H2O = 5-formamido-1-(5-phospho-D-ribosyl)imidazole-4-carboxamide. It participates in purine metabolism; IMP biosynthesis via de novo pathway; 5-formamido-1-(5-phospho-D-ribosyl)imidazole-4-carboxamide from 5-amino-1-(5-phospho-D-ribosyl)imidazole-4-carboxamide (10-formyl THF route): step 1/1. Its pathway is purine metabolism; IMP biosynthesis via de novo pathway; IMP from 5-formamido-1-(5-phospho-D-ribosyl)imidazole-4-carboxamide: step 1/1. This Prochlorococcus marinus (strain MIT 9312) protein is Bifunctional purine biosynthesis protein PurH.